The primary structure comprises 286 residues: Alpha-ketoglutarate-dependent dioxygenase alkB homolog 3 (286 aa).

Residues 1 to 38 (MEDKRRRARVQGAWAGPAKSQATAQPAPTAENNLQQRP) are disordered. Over residues 20-36 (SQATAQPAPTAENNLQQ) the composition is skewed to polar residues. Substrate-binding positions include W115 and 141–143 (YTY). One can recognise a Fe2OG dioxygenase domain in the interval 172-278 (SFNSLLCNLY…RINLTFRTVY (107 aa)). Residue L177 is modified to (4R)-5-hydroxyleucine; alternate. L177 is subject to (4R)-5-oxoleucine; alternate. 2-oxoglutarate is bound at residue 179 to 181 (NLY). Positions 191 and 193 each coordinate Fe cation. A substrate-binding site is contributed by D194. Residue H257 participates in Fe cation binding. Residues 269–275 (RINLTFR) and R275 contribute to the 2-oxoglutarate site.

Belongs to the alkB family. As to quaternary structure, interacts with the ASCC complex composed of ASCC1, ASCC2 and ASCC3. Interacts directly with ASCC3, and is thereby recruited to the ASCC complex. Interacts with OTUD4; the interaction is direct. Interacts with USP7 and USP9X. Requires Fe(2+) as cofactor. Ubiquitinated; undergoes 'Lys-48'-linked polyubiquitination. OTUD4 promotes USP7 and USP9X-dependent deubiquitination of 'Lys-48'-polyubiquitinated ALKBH3 promoting the repair of alkylated DNA lesions.

The protein localises to the nucleus. The protein resides in the cytoplasm. It carries out the reaction an N(1)-methyladenosine in mRNA + 2-oxoglutarate + O2 = an adenosine in mRNA + formaldehyde + succinate + CO2. It catalyses the reaction a methylated nucleobase within DNA + 2-oxoglutarate + O2 = a nucleobase within DNA + formaldehyde + succinate + CO2. The enzyme catalyses an N(1)-methyl-2'-deoxyadenosine in single-stranded DNA + 2-oxoglutarate + O2 = a 2'-deoxyadenosine in single-stranded DNA + formaldehyde + succinate + CO2 + H(+). The catalysed reaction is an N(3)-methyl-2'-deoxycytidine in single-stranded DNA + 2-oxoglutarate + O2 = a 2'-deoxycytidine in single-stranded DNA + formaldehyde + succinate + CO2 + H(+). It carries out the reaction a 3,N(4)-etheno-2'-deoxycytidine in single-stranded DNA + 2-oxoglutarate + O2 + H2O = a 2'-deoxycytidine in single-stranded DNA + glyoxal + succinate + CO2. Its activity is regulated as follows. Activated by ascorbate. Functionally, dioxygenase that mediates demethylation of DNA and RNA containing 1-methyladenosine (m1A). Repairs alkylated DNA containing 1-methyladenosine (m1A) and 3-methylcytosine (m3C) by oxidative demethylation. Has a strong preference for single-stranded DNA. Able to process alkylated m3C within double-stranded regions via its interaction with ASCC3, which promotes DNA unwinding to generate single-stranded substrate needed for ALKBH3. Can repair exocyclic 3,N4-ethenocytosine adducs in single-stranded DNA. Also acts on RNA. Demethylates N(1)-methyladenosine (m1A) RNA, an epigenetic internal modification of messenger RNAs (mRNAs) highly enriched within 5'-untranslated regions (UTRs) and in the vicinity of start codons. Requires molecular oxygen, alpha-ketoglutarate and iron. This is Alpha-ketoglutarate-dependent dioxygenase alkB homolog 3 from Bos taurus (Bovine).